Consider the following 401-residue polypeptide: NADH-quinone oxidoreductase subunit D 2 (401 aa).

Belongs to the complex I 49 kDa subunit family. NDH-1 is composed of 14 different subunits. Subunits NuoB, C, D, E, F, and G constitute the peripheral sector of the complex.

It is found in the cell inner membrane. The catalysed reaction is a quinone + NADH + 5 H(+)(in) = a quinol + NAD(+) + 4 H(+)(out). NDH-1 shuttles electrons from NADH, via FMN and iron-sulfur (Fe-S) centers, to quinones in the respiratory chain. The immediate electron acceptor for the enzyme in this species is believed to be ubiquinone. Couples the redox reaction to proton translocation (for every two electrons transferred, four hydrogen ions are translocated across the cytoplasmic membrane), and thus conserves the redox energy in a proton gradient. This is NADH-quinone oxidoreductase subunit D 2 from Koribacter versatilis (strain Ellin345).